The sequence spans 108 residues: MTGTGKTVTRVDLCEAVYQKVGLSRTESSAFVELVLKEITDCLEKGETVKLSSFGSFMVRKKGQRIGRNPKTGTEVPISPRRVMVFKPSAILKQRINANGAAAPTKTD.

It belongs to the bacterial histone-like protein family. In terms of assembly, heterodimer of an alpha and a beta chain.

Its function is as follows. This protein is one of the two subunits of integration host factor, a specific DNA-binding protein that functions in genetic recombination as well as in transcriptional and translational control. The protein is Integration host factor subunit alpha of Rhodopseudomonas palustris (strain BisB18).